Consider the following 537-residue polypeptide: Pheophorbide a oxygenase, chloroplastic (537 aa).

A chloroplast-targeting transit peptide spans 1–49; the sequence is MSVVLLSSTSATITKSQSKKIPFLSPTTKFPLKVSISPSRSKLFHNPLR. Residues 51–77 form a disordered region; that stretch reads AAPPSVPTSDSTEEKRIEEEYGGDKEE. Basic and acidic residues predominate over residues 62 to 77; the sequence is TEEKRIEEEYGGDKEE. In terms of domain architecture, Rieske spans 88 to 200; sequence WYPVSLVEDL…TMVSQGLLFV (113 aa). [2Fe-2S] cluster is bound by residues Cys-130, His-132, Cys-150, and His-153.

In terms of assembly, interacts with HCAR, SGR1, RCCR, PPH and the LHCII complex. Part of a SGR1-CCE-LHCII complex, which acts in chlorophyll breakdown.

Its subcellular location is the plastid. It is found in the chloroplast thylakoid membrane. The catalysed reaction is pheophorbide a + 2 reduced [2Fe-2S]-[ferredoxin] + O2 + 2 H(+) = red chlorophyll catabolite + 2 oxidized [2Fe-2S]-[ferredoxin]. The protein operates within porphyrin-containing compound metabolism; chlorophyll degradation. Its activity is regulated as follows. Might be regulated by a phosphorylation/dephosphorylation mechanism. In terms of biological role, catalyzes the key reaction of chlorophyll catabolism, porphyrin macrocycle cleavage of pheophorbide a (pheide a) to a primary fluorescent catabolite (pFCC). Works in a two-step reaction with red chlorophyll catabolite reductase (RCCR). Creates the intermediate RCC through the opening of the porphyrin macrocycle by the introduction of one atom of molecular oxygen at the alpha-methine bridge. Seems to be specific for pheide a. Belongs to the chlorophyll catabolic enzymes (CCEs). The sequence is that of Pheophorbide a oxygenase, chloroplastic (PAO) from Arabidopsis thaliana (Mouse-ear cress).